Here is a 103-residue protein sequence, read N- to C-terminus: Small ribosomal subunit protein uS10 (103 aa).

The protein belongs to the universal ribosomal protein uS10 family. Part of the 30S ribosomal subunit.

Its function is as follows. Involved in the binding of tRNA to the ribosomes. This is Small ribosomal subunit protein uS10 from Acinetobacter baylyi (strain ATCC 33305 / BD413 / ADP1).